The sequence spans 510 residues: Cytochrome P450 52C2 (510 aa).

Cysteine 458 lines the heme pocket.

It belongs to the cytochrome P450 family. Heme serves as cofactor.

The protein resides in the membrane. In terms of biological role, together with an NADPH cytochrome P450 the enzyme system catalyzes the terminal hydroxylation as the first step in the assimilation of alkanes and fatty acids. The chain is Cytochrome P450 52C2 (CYP52C2) from Candida maltosa (Yeast).